Reading from the N-terminus, the 147-residue chain is Large ribosomal subunit protein bL9 (147 aa).

Belongs to the bacterial ribosomal protein bL9 family.

Its function is as follows. Binds to the 23S rRNA. This is Large ribosomal subunit protein bL9 from Trichlorobacter lovleyi (strain ATCC BAA-1151 / DSM 17278 / SZ) (Geobacter lovleyi).